The chain runs to 339 residues: Ketol-acid reductoisomerase (NADP(+)) (339 aa).

A KARI N-terminal Rossmann domain is found at 1–182 (MRVYYDRDAD…GGGRAGIIET (182 aa)). Residues 24–27 (YGSQ), Arg48, Ser51, Ser53, and 83–86 (DELQ) contribute to the NADP(+) site. His108 is a catalytic residue. Gly134 serves as a coordination point for NADP(+). The KARI C-terminal knotted domain occupies 183 to 328 (TFKEECETDL…ERLRGMMPWI (146 aa)). Mg(2+)-binding residues include Asp191, Glu195, Glu227, and Glu231. Ser252 provides a ligand contact to substrate.

The protein belongs to the ketol-acid reductoisomerase family. Mg(2+) serves as cofactor.

The catalysed reaction is (2R)-2,3-dihydroxy-3-methylbutanoate + NADP(+) = (2S)-2-acetolactate + NADPH + H(+). It carries out the reaction (2R,3R)-2,3-dihydroxy-3-methylpentanoate + NADP(+) = (S)-2-ethyl-2-hydroxy-3-oxobutanoate + NADPH + H(+). The protein operates within amino-acid biosynthesis; L-isoleucine biosynthesis; L-isoleucine from 2-oxobutanoate: step 2/4. Its pathway is amino-acid biosynthesis; L-valine biosynthesis; L-valine from pyruvate: step 2/4. Functionally, involved in the biosynthesis of branched-chain amino acids (BCAA). Catalyzes an alkyl-migration followed by a ketol-acid reduction of (S)-2-acetolactate (S2AL) to yield (R)-2,3-dihydroxy-isovalerate. In the isomerase reaction, S2AL is rearranged via a Mg-dependent methyl migration to produce 3-hydroxy-3-methyl-2-ketobutyrate (HMKB). In the reductase reaction, this 2-ketoacid undergoes a metal-dependent reduction by NADPH to yield (R)-2,3-dihydroxy-isovalerate. This Methylobacterium sp. (strain 4-46) protein is Ketol-acid reductoisomerase (NADP(+)).